A 218-amino-acid polypeptide reads, in one-letter code: Small ribosomal subunit protein uS3 (218 aa).

In terms of domain architecture, KH type-2 spans 38-106; sequence IRKFIATKLA…RVHINIVEIK (69 aa).

This sequence belongs to the universal ribosomal protein uS3 family. In terms of assembly, part of the 30S ribosomal subunit. Forms a tight complex with proteins S10 and S14.

In terms of biological role, binds the lower part of the 30S subunit head. Binds mRNA in the 70S ribosome, positioning it for translation. The polypeptide is Small ribosomal subunit protein uS3 (Enterococcus faecalis (strain ATCC 700802 / V583)).